The sequence spans 338 residues: Lipoate-protein ligase A (338 aa).

One can recognise a BPL/LPL catalytic domain in the interval 29–216 (PATQRVLFLW…AFFEHYSERV (188 aa)). ATP is bound by residues arginine 71, 76–79 (GAVF), and lysine 134. Lysine 134 is a (R)-lipoate binding site.

Belongs to the LplA family. Monomer.

It is found in the cytoplasm. It catalyses the reaction L-lysyl-[lipoyl-carrier protein] + (R)-lipoate + ATP = N(6)-[(R)-lipoyl]-L-lysyl-[lipoyl-carrier protein] + AMP + diphosphate + H(+). The protein operates within protein modification; protein lipoylation via exogenous pathway; protein N(6)-(lipoyl)lysine from lipoate: step 1/2. It participates in protein modification; protein lipoylation via exogenous pathway; protein N(6)-(lipoyl)lysine from lipoate: step 2/2. Its function is as follows. Catalyzes both the ATP-dependent activation of exogenously supplied lipoate to lipoyl-AMP and the transfer of the activated lipoyl onto the lipoyl domains of lipoate-dependent enzymes. The protein is Lipoate-protein ligase A of Enterobacter sp. (strain 638).